A 237-amino-acid polypeptide reads, in one-letter code: Ribonuclease PH (237 aa).

Residues Arg-86 and 124-126 contribute to the phosphate site; that span reads GTR.

The protein belongs to the RNase PH family. In terms of assembly, homohexameric ring arranged as a trimer of dimers.

It carries out the reaction tRNA(n+1) + phosphate = tRNA(n) + a ribonucleoside 5'-diphosphate. Its function is as follows. Phosphorolytic 3'-5' exoribonuclease that plays an important role in tRNA 3'-end maturation. Removes nucleotide residues following the 3'-CCA terminus of tRNAs; can also add nucleotides to the ends of RNA molecules by using nucleoside diphosphates as substrates, but this may not be physiologically important. Probably plays a role in initiation of 16S rRNA degradation (leading to ribosome degradation) during starvation. In Shewanella baltica (strain OS223), this protein is Ribonuclease PH.